Reading from the N-terminus, the 503-residue chain is MRINPGEITKVLEEKIKSFEEKIDLEDTGKVIQVGDGIARAYGLNKVMVSELVEFVETGVKGVAFNLEEDNVGIIILGEYKDIKEGHTVRRLKRIIEVPVGEELLGRVVNPLGEPLDGKGPINAKNFRPIEIKAPGVIYRKPVDTPLQTGIKAIDSMIPIGRGQRELIIGDRQTGKTAIAIDTIINQKGQGVYCIYVAIGQKKSAIARIIDKLRQYGAMEYTTVVVASASDPASLQYIAPYAGCAMGEYFAYSGRDALVVYDDLSKHAVAYRQLSLLMRRPPGREAYPGDIFYLHSRLLERAVRLNDKLGGGSLTALPIVETQANDISAYIPTNVISITDGQIYLEPGLFYAGQRPAINVGLSVSRVGGSAQIKAMKQVAGMLRIDLAQYRELETFAQFATELDPATRAQIIRGQRLMELLKQEQYSPMPVEEQVVVLFAGVRGYLDDLPVEEVRRFEKEFLRFMHEKHQDILDDIKTKKELTSETEEKLKKAIEEFKTTFRV.

Residue glycine 170 to threonine 177 coordinates ATP.

The protein belongs to the ATPase alpha/beta chains family. In terms of assembly, F-type ATPases have 2 components, CF(1) - the catalytic core - and CF(0) - the membrane proton channel. CF(1) has five subunits: alpha(3), beta(3), gamma(1), delta(1), epsilon(1). CF(0) has three main subunits: a(1), b(2) and c(9-12). The alpha and beta chains form an alternating ring which encloses part of the gamma chain. CF(1) is attached to CF(0) by a central stalk formed by the gamma and epsilon chains, while a peripheral stalk is formed by the delta and b chains.

The protein resides in the cell inner membrane. It carries out the reaction ATP + H2O + 4 H(+)(in) = ADP + phosphate + 5 H(+)(out). Its function is as follows. Produces ATP from ADP in the presence of a proton gradient across the membrane. The alpha chain is a regulatory subunit. The protein is ATP synthase subunit alpha of Thermotoga maritima (strain ATCC 43589 / DSM 3109 / JCM 10099 / NBRC 100826 / MSB8).